A 200-amino-acid chain; its full sequence is Putative HTH-type transcriptional regulator YhjB (200 aa).

The HTH luxR-type domain maps to 135-200; the sequence is DIKDLKSLSA…QAAMMLNISS (66 aa). The segment at residues 159-178 is a DNA-binding region (H-T-H motif); sequence NKEIGRALNISTGTVKAHLE.

The chain is Putative HTH-type transcriptional regulator YhjB (yhjB) from Escherichia coli (strain K12).